A 570-amino-acid chain; its full sequence is MVLQQQTHFLTKKIDQEDEEEEPSHDFIFRSKLPDIFIPNHLPLTDYVFQRFSGDGDGDSSTTCIIDGATGRILTYADVQTNMRRIAAGIHRLGIRHGDVVMLLLPNSPEFALSFLAVAYLGAVSTTANPFYTQPEIAKQAKASAAKMIITKKCLVDKLTNLKNDGVLIVCLDDDGDNGVVSSSDDGCVSFTELTQADETELLKPKISPEDTVAMPYSSGTTGLPKGVMITHKGLVTSIAQKVDGENPNLNFTANDVILCFLPMFHIYALDALMLSAMRTGAALLIVPRFELNLVMELIQRYKVTVVPVAPPVVLAFIKSPETERYDLSSVRIMLSGAATLKKELEDAVRLKFPNAIFGQGYGMTESGTVAKSLAFAKNPFKTKSGACGTVIRNAEMKVVDTETGISLPRNKSGEICVRGHQLMKGYLNDPEATARTIDKDGWLHTGDIGFVDDDDEIFIVDRLKELIKFKGYQVAPAELEALLISHPSIDDAAVVAMKDEVADEVPVAFVARSQGSQLTEDDVKSYVNKQVVHYKRIKMVFFIEVIPKAVSGKILRKDLRAKLETMCSK.

The ATP site is built by S218, S219, G220, T221, T222, and K226. Y268 serves as a coordination point for (E)-4-coumaroyl-AMP. R289 serves as a coordination point for CoA. The SBD1 stretch occupies residues 291 to 360 (ELNLVMELIQ…LKFPNAIFGQ (70 aa)). (E)-4-coumaroyl-AMP contacts are provided by A338, Q360, G361, and T365. ATP-binding residues include Q360, G361, T365, D448, and R463. The segment at 361-427 (GYGMTESGTV…VRGHQLMKGY (67 aa)) is SBD2. (E)-4-coumaroyl-AMP contacts are provided by K465 and K469. Residues K471 and G472 each coordinate CoA. Position 554 (K554) interacts with ATP.

Belongs to the ATP-dependent AMP-binding enzyme family. The cofactor is Mg(2+).

The catalysed reaction is (E)-sinapate + ATP + CoA = (E)-sinapoyl-CoA + AMP + diphosphate. The enzyme catalyses (E)-4-coumarate + ATP + CoA = (E)-4-coumaroyl-CoA + AMP + diphosphate. It carries out the reaction (E)-caffeate + ATP + CoA = (E)-caffeoyl-CoA + AMP + diphosphate. It catalyses the reaction (E)-ferulate + ATP + CoA = (E)-feruloyl-CoA + AMP + diphosphate. The catalysed reaction is (E)-sinapate + ATP + H(+) = (E)-sinapoyl-AMP + diphosphate. The enzyme catalyses (E)-sinapoyl-AMP + CoA = (E)-sinapoyl-CoA + AMP + H(+). It carries out the reaction (E)-4-coumarate + ATP + H(+) = (E)-4-coumaroyl-AMP + diphosphate. It catalyses the reaction (E)-4-coumaroyl-AMP + CoA = (E)-4-coumaroyl-CoA + AMP + H(+). The catalysed reaction is (E)-caffeate + ATP + H(+) = (E)-caffeoyl-AMP + diphosphate. The enzyme catalyses (E)-caffeoyl-AMP + CoA = (E)-caffeoyl-CoA + AMP + H(+). It carries out the reaction (E)-ferulate + ATP + H(+) = (E)-feruloyl-AMP + diphosphate. It catalyses the reaction (E)-feruloyl-AMP + CoA = (E)-feruloyl-CoA + AMP + H(+). It participates in phytoalexin biosynthesis; 3,4',5-trihydroxystilbene biosynthesis; 3,4',5-trihydroxystilbene from trans-4-coumarate: step 1/2. Produces CoA thioesters of a variety of hydroxy- and methoxy-substituted cinnamic acids, which are used to synthesize several phenylpropanoid-derived compounds, including anthocyanins, flavonoids, isoflavonoids, coumarins, lignin, suberin and wall-bound phenolics. Follows a two-step reaction mechanism, wherein the carboxylate substrate first undergoes adenylation by ATP, followed by a thioesterification in the presence of CoA to yield the final CoA thioesters. The chain is 4-coumarate--CoA ligase 4 from Arabidopsis thaliana (Mouse-ear cress).